Here is a 179-residue protein sequence, read N- to C-terminus: Inner membrane-spanning protein YciB (179 aa).

A run of 5 helical transmembrane segments spans residues 22-42 (IYAA…YSWV), 50-70 (MALI…FFHN), 76-96 (WKVT…QWVM), 121-141 (LAWA…AFWL), and 149-169 (FKVF…GVYI).

Belongs to the YciB family.

It localises to the cell inner membrane. Its function is as follows. Plays a role in cell envelope biogenesis, maintenance of cell envelope integrity and membrane homeostasis. The protein is Inner membrane-spanning protein YciB of Salmonella agona (strain SL483).